We begin with the raw amino-acid sequence, 182 residues long: uncharacterized protein (182 aa).

The next 2 membrane-spanning stretches (helical) occupy residues 76–96 and 114–130; these read LLLAMSTLKICPLNLVFLALA and LDLLFVSLTTTACLIGA.

It localises to the membrane. This is an uncharacterized protein from Saccharomyces cerevisiae (strain ATCC 204508 / S288c) (Baker's yeast).